Reading from the N-terminus, the 72-residue chain is MKVGIHPEYKAVKATCSCGNEFEFKSALGKDTIHLDVCGECHPFYTGKQRIVDTGGRVDRFNKRFGAIGSKK.

Zn(2+) contacts are provided by Cys-16, Cys-18, Cys-38, and Cys-41.

This sequence belongs to the bacterial ribosomal protein bL31 family. Type A subfamily. As to quaternary structure, part of the 50S ribosomal subunit. Requires Zn(2+) as cofactor.

Binds the 23S rRNA. This is Large ribosomal subunit protein bL31 from Aliivibrio salmonicida (strain LFI1238) (Vibrio salmonicida (strain LFI1238)).